The following is a 393-amino-acid chain: Chorismate synthase (393 aa).

NADP(+) contacts are provided by arginine 40 and arginine 46. FMN is bound by residues 129 to 131, 250 to 251, glycine 301, 316 to 320, and arginine 342; these read RAS, QA, and KPIST.

It belongs to the chorismate synthase family. As to quaternary structure, homotetramer. The cofactor is FMNH2.

The catalysed reaction is 5-O-(1-carboxyvinyl)-3-phosphoshikimate = chorismate + phosphate. It participates in metabolic intermediate biosynthesis; chorismate biosynthesis; chorismate from D-erythrose 4-phosphate and phosphoenolpyruvate: step 7/7. In terms of biological role, catalyzes the anti-1,4-elimination of the C-3 phosphate and the C-6 proR hydrogen from 5-enolpyruvylshikimate-3-phosphate (EPSP) to yield chorismate, which is the branch point compound that serves as the starting substrate for the three terminal pathways of aromatic amino acid biosynthesis. This reaction introduces a second double bond into the aromatic ring system. This is Chorismate synthase from Acidobacterium capsulatum (strain ATCC 51196 / DSM 11244 / BCRC 80197 / JCM 7670 / NBRC 15755 / NCIMB 13165 / 161).